A 366-amino-acid polypeptide reads, in one-letter code: Apolipoprotein A-V (366 aa).

The N-terminal stretch at 1 to 23 (MASMAAVLTWALALLSAFSATQA) is a signal peptide. Coiled coils occupy residues 54-157 (ATLK…VGED) and 236-262 (TLKA…RAFA). The residue at position 55 (T55) is a Phosphothreonine; by FAM20C. Phosphoserine is present on S59.

Belongs to the apolipoprotein A1/A4/E family. In terms of assembly, interacts with GPIHBP1. Interacts with SORL1; this interaction leads to APOA5 internalization and sorting either to lysosomes and degradation, or to the trans-Golgi network. In terms of processing, phosphorylated by FAM20C in the extracellular medium. Liver and plasma.

It localises to the secreted. The protein resides in the early endosome. Its subcellular location is the late endosome. The protein localises to the golgi apparatus. It is found in the trans-Golgi network. Minor apolipoprotein mainly associated with HDL and to a lesser extent with VLDL. May also be associated with chylomicrons. Important determinant of plasma triglyceride (TG) levels by both being a potent stimulator of apo-CII lipoprotein lipase (LPL) TG hydrolysis and an inhibitor of the hepatic VLDL-TG production rate (without affecting the VLDL-apoB production rate). Activates poorly lecithin:cholesterol acyltransferase (LCAT) and does not enhance efflux of cholesterol from macrophages. Binds heparin. This is Apolipoprotein A-V (APOA5) from Homo sapiens (Human).